The following is a 450-amino-acid chain: uncharacterized protein (450 aa).

N6-(pyridoxal phosphate)lysine is present on lysine 283.

Belongs to the class-III pyridoxal-phosphate-dependent aminotransferase family. The cofactor is pyridoxal 5'-phosphate.

Its function is as follows. Essential for glycerol catabolism. This is an uncharacterized protein from Bacillus subtilis (strain 168).